Here is a 181-residue protein sequence, read N- to C-terminus: SecB-like chaperone MT2006 (181 aa).

The protein belongs to the SecB-like family. As to quaternary structure, homotetramer, interacts with antitoxin HigA1.

Functionally, chaperone component of an atypical, type II toxin-antitoxin chaperone (TAC) module, probably required for antitoxin HigA1 to neutralize its cognate toxin HigB1. This Mycobacterium tuberculosis (strain CDC 1551 / Oshkosh) protein is SecB-like chaperone MT2006 (secBL).